Here is a 1305-residue protein sequence, read N- to C-terminus: MSQKGIKSLTISIASPEQILNWSKGEITKPETINYKSLKPEPNGLFDESIFGPSKDYECYCGKYRKVKHKGKICERCHVEITESIVRRERMGHIELAAPVAHIWFTKELPSPSKISLLLDITYKEVDQVVYFVNYIVLDEGNNVYDGKSIFNKKEVLDLTSPKNSIRSRNKLRRTLRNIQERIEDELNHEREALIQDFDYRLAVTYDQMLKDSNIPFSVKDVMAFIEKHTGVRFGIGAEAIRELLEKLNLEEEHEKIKQAIQNSPNAYDQKTKRLLRRLECVRWIKDSGSKPEWMVMTRIPVTPSETRPIISLDGGRFTTSDTNNFYRKIIIRNERLKQMQATDAPEILLDNEKRLLQEAVDSLFDNNSRKKPVVGKDKRPLKSLSNHLKGKQGLFRQNLLGKRVDYSGRSVIVVGPELKMYEVGIPALMILKLFRPYIISELIRKRDELGNEIQPICANIKLAEQKILAQDNEIWPVVEKVIKQRPVILNRAPTLHRLGIQAFEPKMVDGKAIRLHPLVTTAFNADFDGDQMAVHIPLSKEAVAEARSILLASWHILGPKDGKPIITPTQDMILGIYYLTKEKFPQVIEEMMAKDPTQARVEFINNFHIFSTQDEAIRAYKLKTIRINDVIGITTKAFNNKTFSKEGILVTTVGKIIFNQAFPVNFPYINDVKNLYGENQFEIIGMHESILDYLKAYNLKEPLTKKTLSTVIDYLYKVSEIEVVPQTMDKIKALGFKYSMISATSISAFDIPSYDQKYEYFKETDELVSKLREFYLDGKLTDDERYTKVVQAWSQTKDKVTHDIEKLINSNEYKDNPIVIMAKSGARGNTSNFTQLAGMRGLMSKSYNYDQKNNNGVIKDTIEIPIKHSFIEGLSVSEYFNSSFGARKGMTDTAMKTAKSGYMTRKLVDSTQAVVIKDHDCGTKEGIIVREIRNTKDNTSIESLKDRIVGRYSINTIYDTKNKLIIESDKLITSEIANIIQNSGIREVEVRSPLHCASLYGVCQKCFGLDLSTNKLIETGTAIGVIAAQSIGEPGTQLTMRTFHTGGVAGDTNITQGFERIKQLFDCIQPQENEKAVISQVKGTVERIEKDSNTNGYNVVIKYNKDNYVNYPTRSNAVLRVKTGDEIIAGQKITEGSIDVNDLLKYAGIENVRHYIIKEVQKVYRMQGIEISDKYIEVIISQLTNKITITNPGDSGLFVGETISINEFTEVAQNMLVNKKKPPSAINQVFGLDHAPSKSGSFLSAASFQDTKKILTDAAARSQKDMLIGLKENVILGNLIPAGTGLKDVEEVIAYGEEMYKKQY.

Zn(2+)-binding residues include cysteine 59, cysteine 61, cysteine 74, and cysteine 77. Aspartate 527, aspartate 529, and aspartate 531 together coordinate Mg(2+). The Zn(2+) site is built by cysteine 922, cysteine 997, cysteine 1004, and cysteine 1007.

This sequence belongs to the RNA polymerase beta' chain family. As to quaternary structure, the RNAP catalytic core consists of 2 alpha, 1 beta, 1 beta' and 1 omega subunit. When a sigma factor is associated with the core the holoenzyme is formed, which can initiate transcription. The cofactor is Mg(2+). It depends on Zn(2+) as a cofactor.

The catalysed reaction is RNA(n) + a ribonucleoside 5'-triphosphate = RNA(n+1) + diphosphate. DNA-dependent RNA polymerase catalyzes the transcription of DNA into RNA using the four ribonucleoside triphosphates as substrates. The polypeptide is DNA-directed RNA polymerase subunit beta' (Ureaplasma parvum serovar 3 (strain ATCC 700970)).